Here is a 327-residue protein sequence, read N- to C-terminus: Flap endonuclease 1 (327 aa).

The interval 1–100 (MGNADLRQLA…DEIADRREQR (100 aa)) is N-domain. The Mg(2+) site is built by Asp28, Asp82, Glu154, Glu156, Asp176, Asp178, and Asp226. The segment at 118 to 247 (EAARLDARTQ…TALDAIGEHG (130 aa)) is I-domain. The interval 319 to 327 (AQTGLDRWT) is interaction with PCNA.

It belongs to the XPG/RAD2 endonuclease family. FEN1 subfamily. In terms of assembly, interacts with PCNA. PCNA stimulates the nuclease activity without altering cleavage specificity. Requires Mg(2+) as cofactor.

Functionally, structure-specific nuclease with 5'-flap endonuclease and 5'-3' exonuclease activities involved in DNA replication and repair. During DNA replication, cleaves the 5'-overhanging flap structure that is generated by displacement synthesis when DNA polymerase encounters the 5'-end of a downstream Okazaki fragment. Binds the unpaired 3'-DNA end and kinks the DNA to facilitate 5' cleavage specificity. Cleaves one nucleotide into the double-stranded DNA from the junction in flap DNA, leaving a nick for ligation. Also involved in the base excision repair (BER) pathway. Acts as a genome stabilization factor that prevents flaps from equilibrating into structures that lead to duplications and deletions. Also possesses 5'-3' exonuclease activity on nicked or gapped double-stranded DNA. The protein is Flap endonuclease 1 of Halobacterium salinarum (strain ATCC 29341 / DSM 671 / R1).